A 506-amino-acid chain; its full sequence is Dipeptide and tripeptide permease A (506 aa).

Residues 1-36 (MSTANNNSEHPESVSLNAFKQPKAFYLIFSIELWER) lie on the Cytoplasmic side of the membrane. The chain crosses the membrane as a helical span at residues 37–57 (FGYYGLQGIMAVYLVKMLGLS). Residues 58 to 61 (EADS) lie on the Periplasmic side of the membrane. A helical membrane pass occupies residues 62-82 (ITLFSSFSALVYGFVAIGGWL). Residues 83-91 (GDKVLGSKR) lie on the Cytoplasmic side of the membrane. 2 consecutive transmembrane segments (helical) span residues 92–112 (VIVLGALVLAVGYAMVAYSGH) and 113–133 (EIFWVYLGMATIAVGSGLFKA). Over 134–155 (NPSSLLSTCYEKDDPRLDGAFT) the chain is Cytoplasmic. Residues 156–176 (MYYMSVNIGSFLSMLATPWLA) traverse the membrane as a helical segment. The Periplasmic portion of the chain corresponds to 177-180 (AKYG). A helical membrane pass occupies residues 181-201 (WSVAFSLSVVGMLITLVNFMV). The Cytoplasmic segment spans residues 202-222 (CHKWVKQHGSKPDFKPLQVKK). Residues 223-243 (LLMVLVGVVALVALSSWLLHN) traverse the membrane as a helical segment. The Periplasmic portion of the chain corresponds to 244–248 (QIIAR). A helical membrane pass occupies residues 249–269 (WALAIVSIGIVIVFAKETFAL). At 270-276 (HGAARRK) the chain is on the cytoplasmic side. Residues 277–297 (MIVAFLLMLEAVVFFVLYSQM) traverse the membrane as a helical segment. Residues 298-322 (PTSLNFFAIHNVEHNILGLAFEPEQ) lie on the Periplasmic side of the membrane. Residues 323-343 (YQALNPFWIMLASPILAALYN) form a helical membrane-spanning segment. Residues 344–354 (KMGDRLPMPHK) lie on the Cytoplasmic side of the membrane. The helical transmembrane segment at 355 to 375 (FAFGMILCSGAFLVLPWGASF) threads the bilayer. Residues 376-385 (ANEQGIVSVN) lie on the Periplasmic side of the membrane. Residues 386–406 (WLILSYALQSIGELMISGLGL) form a helical membrane-spanning segment. The Cytoplasmic segment spans residues 407 to 416 (AMVAQLVPQR). Residues 417-437 (LMGFIMGSWFLTTAAAALIAG) traverse the membrane as a helical segment. Over 438–461 (KVAGLTAVPGDVNDAHASLAIYSH) the chain is Periplasmic. A helical transmembrane segment spans residues 462-482 (VFMQIGIATAVIAILMMLTAP). Topologically, residues 483–506 (KLHRMTLDTAEDTEKKAQAAAITN) are cytoplasmic.

It belongs to the major facilitator superfamily. Proton-dependent oligopeptide transporter (POT/PTR) (TC 2.A.17) family. DtpA subfamily.

Its subcellular location is the cell inner membrane. Functionally, proton-dependent permease that transports di- and tripeptides. In Serratia proteamaculans (strain 568), this protein is Dipeptide and tripeptide permease A.